The primary structure comprises 105 residues: uncharacterized protein (105 aa).

The protein to C.jejuni CJ1463.

This is an uncharacterized protein from Helicobacter pylori (strain ATCC 700392 / 26695) (Campylobacter pylori).